The chain runs to 201 residues: Nascent polypeptide-associated complex subunit alpha (201 aa).

Residues 1-20 (MANPRVEELPDEEVKKTVVD) are compositionally biased toward basic and acidic residues. Disordered regions lie at residues 1 to 51 (MANP…SRNE) and 118 to 165 (AQQL…IEDK). Acidic residues predominate over residues 21 to 36 (DHDDDSSSDSDGEEET). Residues 48–113 (SRNEKKARKA…AKIEDLNASA (66 aa)) form the NAC-A/B domain. Basic and acidic residues predominate over residues 126 to 149 (GHDHDHAGHSHGEAKASEGDAKKE). Positions 150–161 (EEDDDEEVDADG) are enriched in acidic residues. A UBA domain is found at 162 to 200 (IEDKDIELVMTQAGVSRTKAIKALKENDNDIVNSIMALS).

The protein belongs to the NAC-alpha family. In terms of assembly, part of the nascent polypeptide-associated complex (NAC), consisting of EGD2 and EGD1. NAC associates with ribosomes via EGD1.

The protein localises to the cytoplasm. The protein resides in the nucleus. Its function is as follows. Component of the nascent polypeptide-associated complex (NAC), a dynamic component of the ribosomal exit tunnel, protecting the emerging polypeptides from interaction with other cytoplasmic proteins to ensure appropriate nascent protein targeting. The NAC complex also promotes mitochondrial protein import by enhancing productive ribosome interactions with the outer mitochondrial membrane and blocks the inappropriate interaction of ribosomes translating non-secretory nascent polypeptides with translocation sites in the membrane of the endoplasmic reticulum. EGD2 may also be involved in transcription regulation. This is Nascent polypeptide-associated complex subunit alpha (EGD2) from Pyricularia oryzae (strain 70-15 / ATCC MYA-4617 / FGSC 8958) (Rice blast fungus).